The chain runs to 537 residues: Extracellular exo-inulinase inuE (537 aa).

A signal peptide spans 1 to 19 (MARLLKAVTVCALAGIAHA). Residue Asp41 is part of the active site. N-linked (GlcNAc...) asparagine glycans are attached at residues Asn49, Asn67, Asn112, Asn300, Asn363, Asn398, Asn430, and Asn531.

It belongs to the glycosyl hydrolase 32 family.

The protein localises to the secreted. It catalyses the reaction Hydrolysis of terminal, non-reducing (2-&gt;1)- and (2-&gt;6)-linked beta-D-fructofuranose residues in fructans.. Exo-inulinase involved in utilization of the plant storage polymer inulin, consisting of fructooligosaccharides with a degree of polymerization (DP) value from 2 to 60. Splits off terminal fructose units successively from the non-reducing end of the inulin molecule, and also hydrolyze sucrose and raffinose. The polypeptide is Extracellular exo-inulinase inuE (inuE) (Aspergillus niger (strain ATCC MYA-4892 / CBS 513.88 / FGSC A1513)).